The sequence spans 480 residues: ATP synthase subunit beta (480 aa).

An ATP-binding site is contributed by 158–165 (GGAGVGKT).

The protein belongs to the ATPase alpha/beta chains family. In terms of assembly, F-type ATPases have 2 components, CF(1) - the catalytic core - and CF(0) - the membrane proton channel. CF(1) has five subunits: alpha(3), beta(3), gamma(1), delta(1), epsilon(1). CF(0) has three main subunits: a(1), b(2) and c(9-12). The alpha and beta chains form an alternating ring which encloses part of the gamma chain. CF(1) is attached to CF(0) by a central stalk formed by the gamma and epsilon chains, while a peripheral stalk is formed by the delta and b chains.

The protein resides in the cell inner membrane. It catalyses the reaction ATP + H2O + 4 H(+)(in) = ADP + phosphate + 5 H(+)(out). In terms of biological role, produces ATP from ADP in the presence of a proton gradient across the membrane. The catalytic sites are hosted primarily by the beta subunits. The polypeptide is ATP synthase subunit beta (Koribacter versatilis (strain Ellin345)).